The following is a 131-amino-acid chain: Large ribosomal subunit protein bL17 (131 aa).

The protein belongs to the bacterial ribosomal protein bL17 family. In terms of assembly, part of the 50S ribosomal subunit. Contacts protein L32.

The sequence is that of Large ribosomal subunit protein bL17 from Thermotoga sp. (strain RQ2).